The chain runs to 179 residues: Adenine phosphoribosyltransferase (179 aa).

This sequence belongs to the purine/pyrimidine phosphoribosyltransferase family. Homodimer.

It is found in the cytoplasm. The catalysed reaction is AMP + diphosphate = 5-phospho-alpha-D-ribose 1-diphosphate + adenine. The protein operates within purine metabolism; AMP biosynthesis via salvage pathway; AMP from adenine: step 1/1. Functionally, catalyzes a salvage reaction resulting in the formation of AMP, that is energically less costly than de novo synthesis. The polypeptide is Adenine phosphoribosyltransferase (Helicobacter pylori (strain ATCC 700392 / 26695) (Campylobacter pylori)).